A 525-amino-acid polypeptide reads, in one-letter code: MSCSSRASSSRAGGSSSARVSAGGSSFSSGSRCGLGGSSAQGFRGGASSCSLSGGSSGAFGGSFGGGFGSCSVGGGFGGASGSGTGFGGGSSFGGVSGFGRGSGFCGSSRFSSGATGGFYSYGGGMGGGVGDGGLFSGGEKQTMQNLNDRLANYLDKVRALEEANTDLENKIKEWYDKYGPGSGDGGSGRDYSKYYSIIEDLRNQIIAATVENAGIILHIDNARLAADDFRLKYENELCLRQSVEADINGLRKVLDDLTMTRSDLEMQIESFTEELAYLRKNHEEEMKNMQGSSGGEVTVEMNAAPGTDLTKLLNDMRAQYEELAEQNRREAEERFNKQSASLQAQISTDAGAATSAKNEITELKRTLQALEIELQSQLAMKSSLEGTLADTEAGYVAQLSEIQTQISALEEEICQIWGETKCQNAEYKQLLDIKTRLEVEIETYRRLLDGEGGGSSFAEFGGRNSGSVNMGSRDLVSGDSRSGSCSGQGRDSSKTRVTKTIVEELVDGKVVSSQVSSISEVKVK.

The interval 1-30 is disordered; it reads MSCSSRASSSRAGGSSSARVSAGGSSFSSG. Residues 1-139 form a head region; it reads MSCSSRASSS…VGDGGLFSGG (139 aa). The segment at 140–175 is coil 1A; the sequence is EKQTMQNLNDRLANYLDKVRALEEANTDLENKIKEW. The region spanning 140–456 is the IF rod domain; sequence EKQTMQNLND…RLLDGEGGGS (317 aa). Residues 176–198 form a linker 1 region; the sequence is YDKYGPGSGDGGSGRDYSKYYSI. The tract at residues 199-290 is coil 1B; the sequence is IEDLRNQIIA…KNHEEEMKNM (92 aa). The linker 12 stretch occupies residues 291-313; sequence QGSSGGEVTVEMNAAPGTDLTKL. Residues 314 to 452 form a coil 2 region; that stretch reads LNDMRAQYEE…ETYRRLLDGE (139 aa). A tail region spans residues 453-525; the sequence is GGGSSFAEFG…VSSISEVKVK (73 aa). Residues 459-497 form a disordered region; it reads AEFGGRNSGSVNMGSRDLVSGDSRSGSCSGQGRDSSKTR. Residues 480–491 are compositionally biased toward polar residues; the sequence is DSRSGSCSGQGR.

It belongs to the intermediate filament family. As to quaternary structure, heterotetramer of two type I and two type II keratins. As to expression, highly expressed in keratinocytes, placenta, colon and spleen. Expressed at lower level in thymus and testis.

In Homo sapiens (Human), this protein is Keratin, type I cytoskeletal 24 (KRT24).